The sequence spans 467 residues: tRNA-2-methylthio-N(6)-dimethylallyladenosine synthase (467 aa).

The segment at 1 to 20 (MSDDTTQIEPAMAQETSPRA) is disordered. One can recognise an MTTase N-terminal domain in the interval 23-143 (RKVFVKTYGC…LPNALARVRG (121 aa)). Residues Cys32, Cys68, Cys106, Cys184, Cys188, and Cys191 each coordinate [4Fe-4S] cluster. Residues 170 to 402 (RKRGVSAFLT…QALLSAQQYA (233 aa)) enclose the Radical SAM core domain. In terms of domain architecture, TRAM spans 405–467 (DSMIGRKMDV…TNSLIAQKLA (63 aa)).

It belongs to the methylthiotransferase family. MiaB subfamily. Monomer. The cofactor is [4Fe-4S] cluster.

It is found in the cytoplasm. It carries out the reaction N(6)-dimethylallyladenosine(37) in tRNA + (sulfur carrier)-SH + AH2 + 2 S-adenosyl-L-methionine = 2-methylsulfanyl-N(6)-dimethylallyladenosine(37) in tRNA + (sulfur carrier)-H + 5'-deoxyadenosine + L-methionine + A + S-adenosyl-L-homocysteine + 2 H(+). Catalyzes the methylthiolation of N6-(dimethylallyl)adenosine (i(6)A), leading to the formation of 2-methylthio-N6-(dimethylallyl)adenosine (ms(2)i(6)A) at position 37 in tRNAs that read codons beginning with uridine. In Brucella abortus (strain S19), this protein is tRNA-2-methylthio-N(6)-dimethylallyladenosine synthase.